The primary structure comprises 436 residues: Glutamyl-tRNA(Gln) amidotransferase subunit D (436 aa).

The region spanning 91 to 420 (QNISIISTGG…GEVAKLMNKN (330 aa)) is the Asparaginase/glutaminase domain. Catalysis depends on residues Thr-101, Thr-177, Asp-178, and Lys-254.

The protein belongs to the asparaginase 1 family. GatD subfamily. In terms of assembly, heterodimer of GatD and GatE.

It catalyses the reaction L-glutamyl-tRNA(Gln) + L-glutamine + ATP + H2O = L-glutaminyl-tRNA(Gln) + L-glutamate + ADP + phosphate + H(+). Its function is as follows. Allows the formation of correctly charged Gln-tRNA(Gln) through the transamidation of misacylated Glu-tRNA(Gln) in organisms which lack glutaminyl-tRNA synthetase. The reaction takes place in the presence of glutamine and ATP through an activated gamma-phospho-Glu-tRNA(Gln). The GatDE system is specific for glutamate and does not act on aspartate. The chain is Glutamyl-tRNA(Gln) amidotransferase subunit D from Methanobrevibacter smithii (strain ATCC 35061 / DSM 861 / OCM 144 / PS).